The chain runs to 662 residues: Protein transport Sec1b (662 aa).

It belongs to the STXBP/unc-18/SEC1 family.

In terms of biological role, involved in the vesicle trafficking. Binds syntaxins. This Arabidopsis thaliana (Mouse-ear cress) protein is Protein transport Sec1b (SEC1B).